Here is a 165-residue protein sequence, read N- to C-terminus: UPF0254 protein MmarC5_0742 (165 aa).

This sequence belongs to the UPF0254 family.

The protein is UPF0254 protein MmarC5_0742 of Methanococcus maripaludis (strain C5 / ATCC BAA-1333).